A 415-amino-acid polypeptide reads, in one-letter code: G2/mitotic-specific cyclin cig1 (415 aa).

2 disordered regions span residues 54–74 and 86–118; these read PTLI…DTFE and EERS…ILTH. The segment covering 57 to 71 has biased composition (low complexity); the sequence is IEGNNESSISSSTGD. Position 96 is a phosphoserine (serine 96).

It belongs to the cyclin family. Cyclin G subfamily.

Functionally, required for efficient passage of the G1/S transition. The sequence is that of G2/mitotic-specific cyclin cig1 (cig1) from Schizosaccharomyces pombe (strain 972 / ATCC 24843) (Fission yeast).